We begin with the raw amino-acid sequence, 151 residues long: Ubiquitin-conjugating enzyme E2 W (151 aa).

Met1 is covalently cross-linked (Peptide (Met-Gly) (interchain with G-Cter in ubiquitin)). In terms of domain architecture, UBC core spans 3–151 (SMQKRLQKEL…TKWWYHDDTC (149 aa)). The active-site Glycyl thioester intermediate is Cys91.

This sequence belongs to the ubiquitin-conjugating enzyme family. Homodimer. Interacts with FANCL. Interacts with STUB1/CHIP. In terms of processing, ubiquitinated in vitro in the presence of FANCL. Autoubiquitinated at Met-1.

It is found in the nucleus. It catalyses the reaction S-ubiquitinyl-[E1 ubiquitin-activating enzyme]-L-cysteine + [E2 ubiquitin-conjugating enzyme]-L-cysteine = [E1 ubiquitin-activating enzyme]-L-cysteine + S-ubiquitinyl-[E2 ubiquitin-conjugating enzyme]-L-cysteine.. The enzyme catalyses S-ubiquitinyl-[E1 ubiquitin-activating enzyme]-L-cysteine + [acceptor protein]-N-terminal-amino acid = [E1 ubiquitin-activating enzyme]-L-cysteine + N-terminal-ubiquitinyl-[acceptor protein].. It participates in protein modification; protein ubiquitination. In terms of biological role, accepts ubiquitin from the E1 complex and catalyzes its covalent attachment to other proteins. Specifically monoubiquitinates the N-terminus of various substrates, including ATXN3, MAPT/TAU, POLR2H/RPB8 and STUB1/CHIP, by recognizing backbone atoms of disordered N-termini. Involved in degradation of misfolded chaperone substrates by mediating monoubiquitination of STUB1/CHIP, leading to recruitment of ATXN3 to monoubiquitinated STUB1/CHIP, and restriction of the length of ubiquitin chain attached to STUB1/CHIP substrates by ATXN3. After UV irradiation, but not after mitomycin-C (MMC) treatment, acts as a specific E2 ubiquitin-conjugating enzyme for the Fanconi anemia complex by associating with E3 ubiquitin-protein ligase FANCL and catalyzing monoubiquitination of FANCD2, a key step in the DNA damage pathway. In vitro catalyzes 'Lys-11'-linked polyubiquitination. UBE2W-catalyzed ubiquitination also occurs in the presence of inactive RING/U-box type E3s, i.e. lacking the active site cysteine residues to form thioester bonds with ubiquitin, or even in the absence of E3, albeit at a slower rate. This is Ubiquitin-conjugating enzyme E2 W (UBE2W) from Bos taurus (Bovine).